The sequence spans 314 residues: Triosephosphate isomerase, chloroplastic (314 aa).

Over residues 1–22 (MAVASTSLASQLSGPKSLSQPY) the composition is skewed to polar residues. Residues 1–25 (MAVASTSLASQLSGPKSLSQPYSGL) are disordered. The transit peptide at 1–59 (MAVASTSLASQLSGPKSLSQPYSGLRRSCPKLDQSHSSLFQHLSLSSSSRKASRAVVAM) directs the protein to the chloroplast. 2 residues coordinate substrate: Asn-70 and Lys-72. His-154 serves as the catalytic Electrophile. The Proton acceptor role is filled by Glu-224.

The protein belongs to the triosephosphate isomerase family. As to quaternary structure, homodimer.

The protein resides in the plastid. Its subcellular location is the chloroplast. It catalyses the reaction D-glyceraldehyde 3-phosphate = dihydroxyacetone phosphate. It participates in carbohydrate biosynthesis; Calvin cycle. This is Triosephosphate isomerase, chloroplastic (TPI) from Fragaria ananassa (Strawberry).